The primary structure comprises 569 residues: Ribonuclease J (569 aa).

6 residues coordinate Zn(2+): H81, H83, D85, H86, H150, and D172. 373–377 (HASGH) provides a ligand contact to substrate. H399 contributes to the Zn(2+) binding site.

Belongs to the metallo-beta-lactamase superfamily. RNA-metabolizing metallo-beta-lactamase-like family. Bacterial RNase J subfamily. As to quaternary structure, homodimer, may be a subunit of the RNA degradosome. Zn(2+) is required as a cofactor.

The protein localises to the cytoplasm. Its function is as follows. An RNase that has 5'-3' exonuclease and possibly endoonuclease activity. Involved in maturation of rRNA and in some organisms also mRNA maturation and/or decay. This is Ribonuclease J from Mycoplasma pneumoniae (strain ATCC 29342 / M129 / Subtype 1) (Mycoplasmoides pneumoniae).